Reading from the N-terminus, the 133-residue chain is MPDSSTALRILVYSDNVQTRERVMRALGKRLHPDLPDLTYVEVATGPMVIRQMDRGGIDLAILDGEATPTGGMGIAKQLKDELASCPPILVLTGRPDDTWLASWSRAEAAVPHPVDPIVLGRTVLSLLRAPAH.

Residues 9-128 (RILVYSDNVQ…VLGRTVLSLL (120 aa)) form the Response regulatory domain. D64 carries the 4-aspartylphosphate modification.

This is an uncharacterized protein from Mycobacterium tuberculosis (strain CDC 1551 / Oshkosh).